A 730-amino-acid polypeptide reads, in one-letter code: Matrix metalloproteinase-9 (730 aa).

Positions Met1–Ala19 are cleaved as a signal peptide. Positions Ala20–Arg107 are cleaved as a propeptide — activation peptide. N-linked (GlcNAc...) asparagine glycosylation is present at Asn39. The Cysteine switch motif lies at Pro98–Val105. Cys100 lines the Zn(2+) pocket. Residues Asn120 and Asn127 are each glycosylated (N-linked (GlcNAc...) asparagine). Residues Asp131 and Asp165 each contribute to the Ca(2+) site. Zn(2+)-binding residues include His175 and Asp177. Asp182, Gly183, Asp185, and Leu187 together coordinate Ca(2+). Zn(2+) is bound at residue His190. Gly197, Gln199, and Asp201 together coordinate Ca(2+). His203 is a Zn(2+) binding site. Residues Asp205, Asp206, and Glu208 each contribute to the Ca(2+) site. Fibronectin type-II domains follow at residues Ser225 to Ser273, Gly283 to Thr331, and Ser342 to Asp390. 6 disulfides stabilise this stretch: Cys230-Cys256, Cys244-Cys271, Cys288-Cys314, Cys302-Cys329, Cys347-Cys373, and Cys361-Cys388. His401 contacts Zn(2+). Residue Glu402 is part of the active site. Residues His405 and His411 each coordinate Zn(2+). A disordered region spans residues Leu442 to Pro529. A compositionally biased stretch (pro residues) spans Pro463 to Ala477. The span at Tyr478–Gly489 shows a compositional bias: low complexity. Over residues Ala490–Pro514 the composition is skewed to pro residues. Cys534 and Cys729 form a disulfide bridge. Hemopexin repeat units lie at residues Val536–Leu581, Pro582–Pro626, Val628–Val675, and Pro676–Cys729.

It belongs to the peptidase M10A family. In terms of assembly, exists as monomer or homodimer; disulfide-linked. Also exists as heterodimer with LCN2. Macrophages and transformed cell lines produce only the monomeric form. Interacts with ECM1. Zn(2+) is required as a cofactor. Ca(2+) serves as cofactor. N- and O-glycosylated.

The protein resides in the secreted. It localises to the extracellular space. It is found in the extracellular matrix. The enzyme catalyses Cleavage of gelatin types I and V and collagen types IV and V.. Its activity is regulated as follows. Inhibited by histatin-3 1/24 (histatin-5). Inhibited by ECM1. In terms of biological role, matrix metalloproteinase that plays an essential role in local proteolysis of the extracellular matrix and in leukocyte migration. Could play a role in bone osteoclastic resorption. Cleaves KiSS1 at a Gly-|-Leu bond. Cleaves NINJ1 to generate the Secreted ninjurin-1 form. Cleaves type IV and type V collagen into large C-terminal three quarter fragments and shorter N-terminal one quarter fragments. Degrades fibronectin but not laminin or Pz-peptide. The protein is Matrix metalloproteinase-9 (Mmp9) of Mus musculus (Mouse).